The chain runs to 466 residues: DNA repair protein RadA (466 aa).

The segment at 12 to 29 (CSECQHVAPKWVGRCANC) adopts a C4-type zinc-finger fold. ATP is bound at residue 100–107 (GDPGVGKS). A RadA KNRFG motif motif is present at residues 261–265 (KNRFG). The tract at residues 359 to 466 (DLYLSTVGGM…MREIAIAGAQ (108 aa)) is lon-protease-like.

Belongs to the RecA family. RadA subfamily. Interacts with DisA.

DNA-dependent ATPase involved in processing of recombination intermediates, plays a role in repairing DNA breaks. Stimulates the branch migration of RecA-mediated strand transfer reactions, allowing the 3' invading strand to extend heteroduplex DNA faster. Binds ssDNA in the presence of ADP but not other nucleotides, has ATPase activity that is stimulated by ssDNA and various branched DNA structures, but inhibited by SSB. Does not have RecA's homology-searching function. Also inhibits the diadenylate cyclase activity of DisA. In Mycolicibacterium smegmatis (strain ATCC 700084 / mc(2)155) (Mycobacterium smegmatis), this protein is DNA repair protein RadA.